Here is a 250-residue protein sequence, read N- to C-terminus: Triosephosphate isomerase, glycosomal (250 aa).

Positions 11 and 13 each coordinate substrate. Residue histidine 95 is the Electrophile of the active site. Residue glutamate 167 is the Proton acceptor of the active site.

This sequence belongs to the triosephosphate isomerase family. As to quaternary structure, homodimer.

It localises to the glycosome. It catalyses the reaction D-glyceraldehyde 3-phosphate = dihydroxyacetone phosphate. It participates in carbohydrate biosynthesis; gluconeogenesis. The protein operates within carbohydrate degradation; glycolysis; D-glyceraldehyde 3-phosphate from glycerone phosphate: step 1/1. The chain is Triosephosphate isomerase, glycosomal from Trypanosoma brucei brucei.